We begin with the raw amino-acid sequence, 56 residues long: Large ribosomal subunit protein bL33 (56 aa).

A compositionally biased stretch (basic and acidic residues) spans Met-1–Leu-12. The disordered stretch occupies residues Met-1–Lys-28. Polar residues predominate over residues Thr-15–Ser-25.

This sequence belongs to the bacterial ribosomal protein bL33 family.

In Albidiferax ferrireducens (strain ATCC BAA-621 / DSM 15236 / T118) (Rhodoferax ferrireducens), this protein is Large ribosomal subunit protein bL33.